Here is a 139-residue protein sequence, read N- to C-terminus: Gonadotropin subunit beta-2 (139 aa).

An N-terminal signal peptide occupies residues 1 to 24; that stretch reads MFPLVLSLFLGATSDIWPLAPAEA. 6 cysteine pairs are disulfide-bonded: C30/C78, C44/C93, C47/C131, C55/C109, C59/C111, and C114/C121. A glycan (N-linked (GlcNAc...) asparagine) is linked at N34.

This sequence belongs to the glycoprotein hormones subunit beta family. Heterodimer of an alpha and a beta chain.

The protein localises to the secreted. Its function is as follows. Involved in gametogenesis and steroidogenesis. This Morone saxatilis (Striped bass) protein is Gonadotropin subunit beta-2 (cgbb).